A 308-amino-acid chain; its full sequence is MEIILAEPRGFCAGVKRAVDILAITLEKYKNERQVYVLHEIVHNKYIVEGFKKQGVVFVSSIEDIKDNRGILIFSAHGVSKSIEDEAKRKGVQVIDATCPLVSKVHKEAKRYEDSGKELILIGHENHPEVKGIIGRVSNPISLVQTMQDVYNLQIKDPDNLSYVTQTTLSIDDTKEIIATLKLRFPSITGPDLKDICYATQNRQNAVKKLAKITDVVLIVGSKNSSNSNRLLDLCISTGKRAYLIDNYKCMNKNWLQGAEKIGITAGASAPDILVDELVNYLKINMNTKVSVMPDGFTENVQFKYTKW.

A [4Fe-4S] cluster-binding site is contributed by cysteine 12. 2 residues coordinate (2E)-4-hydroxy-3-methylbut-2-enyl diphosphate: histidine 43 and histidine 77. Histidine 43 and histidine 77 together coordinate dimethylallyl diphosphate. Isopentenyl diphosphate-binding residues include histidine 43 and histidine 77. A [4Fe-4S] cluster-binding site is contributed by cysteine 99. Histidine 127 contributes to the (2E)-4-hydroxy-3-methylbut-2-enyl diphosphate binding site. Histidine 127 provides a ligand contact to dimethylallyl diphosphate. Residue histidine 127 coordinates isopentenyl diphosphate. Glutamate 129 functions as the Proton donor in the catalytic mechanism. A (2E)-4-hydroxy-3-methylbut-2-enyl diphosphate-binding site is contributed by threonine 167. [4Fe-4S] cluster is bound at residue cysteine 197. The (2E)-4-hydroxy-3-methylbut-2-enyl diphosphate site is built by serine 225, serine 226, asparagine 227, and serine 269. The dimethylallyl diphosphate site is built by serine 225, serine 226, asparagine 227, and serine 269. Isopentenyl diphosphate contacts are provided by serine 225, serine 226, asparagine 227, and serine 269.

The protein belongs to the IspH family. It depends on [4Fe-4S] cluster as a cofactor.

The enzyme catalyses isopentenyl diphosphate + 2 oxidized [2Fe-2S]-[ferredoxin] + H2O = (2E)-4-hydroxy-3-methylbut-2-enyl diphosphate + 2 reduced [2Fe-2S]-[ferredoxin] + 2 H(+). It catalyses the reaction dimethylallyl diphosphate + 2 oxidized [2Fe-2S]-[ferredoxin] + H2O = (2E)-4-hydroxy-3-methylbut-2-enyl diphosphate + 2 reduced [2Fe-2S]-[ferredoxin] + 2 H(+). It participates in isoprenoid biosynthesis; dimethylallyl diphosphate biosynthesis; dimethylallyl diphosphate from (2E)-4-hydroxy-3-methylbutenyl diphosphate: step 1/1. Its pathway is isoprenoid biosynthesis; isopentenyl diphosphate biosynthesis via DXP pathway; isopentenyl diphosphate from 1-deoxy-D-xylulose 5-phosphate: step 6/6. Its function is as follows. Catalyzes the conversion of 1-hydroxy-2-methyl-2-(E)-butenyl 4-diphosphate (HMBPP) into a mixture of isopentenyl diphosphate (IPP) and dimethylallyl diphosphate (DMAPP). Acts in the terminal step of the DOXP/MEP pathway for isoprenoid precursor biosynthesis. This is 4-hydroxy-3-methylbut-2-enyl diphosphate reductase from Wolbachia pipientis subsp. Culex pipiens (strain wPip).